We begin with the raw amino-acid sequence, 241 residues long: Phosducin-like protein 2 (241 aa).

The region spanning Val-34–Ile-202 is the Phosducin domain. Residues Phe-89–Lys-241 are thioredoxin fold.

It belongs to the phosducin family. As to quaternary structure, interacts with the CCT chaperonin complex and actin. In terms of tissue distribution, testis-specific.

The protein localises to the endoplasmic reticulum. Its function is as follows. Essential for male fertility, spermiogenesis and acrosome formation. The protein is Phosducin-like protein 2 (PDCL2) of Homo sapiens (Human).